Here is a 271-residue protein sequence, read N- to C-terminus: Putative phosphoenolpyruvate synthase regulatory protein (271 aa).

152–159 (GASRSGKT) contacts ADP.

Belongs to the pyruvate, phosphate/water dikinase regulatory protein family. PSRP subfamily.

The catalysed reaction is [pyruvate, water dikinase] + ADP = [pyruvate, water dikinase]-phosphate + AMP + H(+). It catalyses the reaction [pyruvate, water dikinase]-phosphate + phosphate + H(+) = [pyruvate, water dikinase] + diphosphate. Functionally, bifunctional serine/threonine kinase and phosphorylase involved in the regulation of the phosphoenolpyruvate synthase (PEPS) by catalyzing its phosphorylation/dephosphorylation. The chain is Putative phosphoenolpyruvate synthase regulatory protein from Marinobacter nauticus (strain ATCC 700491 / DSM 11845 / VT8) (Marinobacter aquaeolei).